The chain runs to 234 residues: Orotidine 5'-phosphate decarboxylase (234 aa).

Residues Asp-14, Lys-36, 63 to 72 (DLKFHDIPNT), Thr-123, Arg-184, Gln-193, Gly-213, and Arg-214 contribute to the substrate site. Lys-65 serves as the catalytic Proton donor.

This sequence belongs to the OMP decarboxylase family. Type 1 subfamily. As to quaternary structure, homodimer.

The catalysed reaction is orotidine 5'-phosphate + H(+) = UMP + CO2. The protein operates within pyrimidine metabolism; UMP biosynthesis via de novo pathway; UMP from orotate: step 2/2. Catalyzes the decarboxylation of orotidine 5'-monophosphate (OMP) to uridine 5'-monophosphate (UMP). This is Orotidine 5'-phosphate decarboxylase from Psychromonas ingrahamii (strain DSM 17664 / CCUG 51855 / 37).